The following is a 153-amino-acid chain: Neuromedin-S (153 aa).

The signal sequence occupies residues 1-26 (MKHLRPQFPLILAIYCFCMLQIPSSG). 3 consecutive propeptides follow at residues 27 to 69 (FPQP…IYKR), 70 to 105 (FLFH…ANRR), and 106 to 108 (MKR). Asn141 is modified (asparagine amide). Positions 144–153 (NIEDEAQIQW) are excised as a propeptide.

This sequence belongs to the NmU family.

The protein resides in the secreted. Implicated in the regulation of circadian rhythms through autocrine and/or paracrine actions. This is Neuromedin-S (NMS) from Homo sapiens (Human).